We begin with the raw amino-acid sequence, 943 residues long: WD repeat-containing protein 3 (943 aa).

WD repeat units follow at residues 21–60, 63–102, 105–144, 147–186, and 189–228; these read SQKG…KILI, GLKQ…GNVT, GHKA…GLYR, GHKD…CFKT, and GHRT…EIED. Residues S240 and S241 each carry the phosphoserine modification. A Phosphothreonine modification is found at T257. Residues 277–316 form a WD 6 repeat; sequence EGRDRVVNLAVDKTGRILACHGTDSVLELFCILSKKEIQK. Residues 326-345 form a disordered region; sequence RKKAKLHSSKGEEEDPEVNV. WD repeat units follow at residues 413–451, 453–493, 494–533, 547–586, 589–630, 631–670, and 673–712; these read GHRS…CIRT, TCEY…ETID, AHDG…DENS, QLDE…FFLS, GHKL…KSLF, AHDD…HIQT, and GHHQ…LILE. Residues K474 and K529 each participate in a glycyl lysine isopeptide (Lys-Gly) (interchain with G-Cter in SUMO2) cross-link. S726 carries the post-translational modification Phosphoserine.

The protein belongs to the WD repeat WDR3/UTP12 family. Part of the small subunit (SSU) processome, composed of more than 70 proteins and the RNA chaperone small nucleolar RNA (snoRNA) U3. As to expression, ubiquitous.

Its subcellular location is the nucleus. The protein resides in the nucleolus. Its function is as follows. Part of the small subunit (SSU) processome, first precursor of the small eukaryotic ribosomal subunit. During the assembly of the SSU processome in the nucleolus, many ribosome biogenesis factors, an RNA chaperone and ribosomal proteins associate with the nascent pre-rRNA and work in concert to generate RNA folding, modifications, rearrangements and cleavage as well as targeted degradation of pre-ribosomal RNA by the RNA exosome. The chain is WD repeat-containing protein 3 from Homo sapiens (Human).